The chain runs to 297 residues: N-acetylmuramic acid 6-phosphate etherase (297 aa).

An SIS domain is found at 55-218; the sequence is ITKHFKQGGR…STGAMVGIGK (164 aa). Glu83 (proton donor) is an active-site residue. Residue Glu114 is part of the active site.

This sequence belongs to the GCKR-like family. MurNAc-6-P etherase subfamily. In terms of assembly, homodimer.

It carries out the reaction N-acetyl-D-muramate 6-phosphate + H2O = N-acetyl-D-glucosamine 6-phosphate + (R)-lactate. Its pathway is amino-sugar metabolism; N-acetylmuramate degradation. Specifically catalyzes the cleavage of the D-lactyl ether substituent of MurNAc 6-phosphate, producing GlcNAc 6-phosphate and D-lactate. The sequence is that of N-acetylmuramic acid 6-phosphate etherase from Oenococcus oeni (strain ATCC BAA-331 / PSU-1).